Consider the following 295-residue polypeptide: Pantothenate synthetase (295 aa).

Histidine 37 functions as the Proton donor in the catalytic mechanism. A (R)-pantoate-binding site is contributed by glutamine 61. Glutamine 61 serves as a coordination point for beta-alanine. 154 to 157 (GRKD) provides a ligand contact to ATP. Glutamine 160 is a (R)-pantoate binding site. Residues valine 183 and 191–194 (QSSR) each bind ATP.

This sequence belongs to the pantothenate synthetase family. Homodimer.

It is found in the cytoplasm. It carries out the reaction (R)-pantoate + beta-alanine + ATP = (R)-pantothenate + AMP + diphosphate + H(+). Its pathway is cofactor biosynthesis; (R)-pantothenate biosynthesis; (R)-pantothenate from (R)-pantoate and beta-alanine: step 1/1. Functionally, catalyzes the condensation of pantoate with beta-alanine in an ATP-dependent reaction via a pantoyl-adenylate intermediate. This chain is Pantothenate synthetase, found in Salinibacter ruber (strain DSM 13855 / M31).